The chain runs to 583 residues: Pyruvate kinase isozyme A, chloroplastic (583 aa).

A chloroplast-targeting transit peptide spans 1-74 (MSQSLHFSPN…NSGVLYNNNN (74 aa)). The span at 43 to 52 (KASTSPSSSS) shows a compositional bias: low complexity. The disordered stretch occupies residues 43–75 (KASTSPSSSSDPQVLVADNGTGNSGVLYNNNNK). Positions 62 to 75 (GTGNSGVLYNNNNK) are enriched in polar residues. Arg-134 is a binding site for substrate. K(+) contacts are provided by Asn-136, Asp-168, and Thr-169. 136 to 139 (NMCH) serves as a coordination point for ATP. Residue Glu-333 coordinates Mg(2+). 3 residues coordinate substrate: Gly-356, Asp-357, and Ser-389. A Mg(2+)-binding site is contributed by Asp-357.

The protein belongs to the pyruvate kinase family. As to quaternary structure, oligomer of alpha and beta subunits. Requires Mg(2+) as cofactor. The cofactor is K(+).

It localises to the plastid. Its subcellular location is the chloroplast. The enzyme catalyses pyruvate + ATP = phosphoenolpyruvate + ADP + H(+). It participates in carbohydrate degradation; glycolysis; pyruvate from D-glyceraldehyde 3-phosphate: step 5/5. This is Pyruvate kinase isozyme A, chloroplastic from Ricinus communis (Castor bean).